The primary structure comprises 330 residues: MTKIMFFGTRDYEKEMALNWGKKNNVEVTTSKELLSSATVDQLKDYDGVTTMQFGKLENDVYPKLESYGIKQIAQRTAGFDMYDLDLAKKHNIVISNVPSYSPETIAEYSVSIALQLVRRFPDIERRVQAHDFTWQAEIMSKPVKNMTVAIIGTGRIGAATAKIYAGFGATITAYDAYPNKDLDFLTYKDSVKEAIKDADIISLHVPANKESYHLFDKTMFDHVKKGAILVNAARGAVINTPDLIDAVNDGTLLGAAIDTYENEAAYFTNDWTNKDIDDKTLLELIEHERILVTPHIAFFSDEAVQNLVEGGLNAALSVINTGTCETRLN.

Residues 156-157 (RI), Asp176, 206-207 (VP), 233-235 (AAR), and Asp259 each bind NAD(+). The active site involves Arg235. Glu264 is a catalytic residue. The Proton donor role is filled by His296.

This sequence belongs to the D-isomer specific 2-hydroxyacid dehydrogenase family.

It catalyses the reaction (R)-lactate + NAD(+) = pyruvate + NADH + H(+). The protein is D-lactate dehydrogenase (ldhD) of Staphylococcus aureus (strain MRSA252).